The primary structure comprises 828 residues: Periplasmic nitrate reductase (828 aa).

Positions 1–31 form a signal peptide, tat-type signal; it reads MKLSRRSFMKANAVAAAAAAAGLSVPGVARA. The 57-residue stretch at 39–95 folds into the 4Fe-4S Mo/W bis-MGD-type domain; it reads IKWDKAPCRFCGTGCGVLVGTQQGRVVACQGDPDAPVNRGLNCIKGYFLPKIMYGKD. The [4Fe-4S] cluster site is built by Cys46, Cys49, Cys53, and Cys81. Mo-bis(molybdopterin guanine dinucleotide)-binding positions include Lys83, Gln150, Asn175, Cys179, 212-219, 243-247, 262-264, Met372, Gln376, Asn482, 508-509, Lys531, Asp558, and 718-727; these read WGANMAEM, STYQH, QSD, SD, and TGRVLEHWHT. Phe794 lines the substrate pocket. The Mo-bis(molybdopterin guanine dinucleotide) site is built by Asn802 and Lys819.

Belongs to the prokaryotic molybdopterin-containing oxidoreductase family. NasA/NapA/NarB subfamily. As to quaternary structure, component of the periplasmic nitrate reductase NapAB complex composed of NapA and NapB. The cofactor is [4Fe-4S] cluster. Requires Mo-bis(molybdopterin guanine dinucleotide) as cofactor. In terms of processing, predicted to be exported by the Tat system. The position of the signal peptide cleavage has not been experimentally proven.

It localises to the periplasm. It catalyses the reaction 2 Fe(II)-[cytochrome] + nitrate + 2 H(+) = 2 Fe(III)-[cytochrome] + nitrite + H2O. Catalytic subunit of the periplasmic nitrate reductase complex NapAB. Receives electrons from NapB and catalyzes the reduction of nitrate to nitrite. The protein is Periplasmic nitrate reductase of Escherichia coli O6:K15:H31 (strain 536 / UPEC).